A 346-amino-acid polypeptide reads, in one-letter code: Methylthioribose-1-phosphate isomerase (346 aa).

Residues 54–56 (RGA), arginine 91, and glutamine 192 contribute to the substrate site. Aspartate 233 serves as the catalytic Proton donor. 243–244 (NK) is a substrate binding site.

The protein belongs to the eIF-2B alpha/beta/delta subunits family. MtnA subfamily.

It carries out the reaction 5-(methylsulfanyl)-alpha-D-ribose 1-phosphate = 5-(methylsulfanyl)-D-ribulose 1-phosphate. It functions in the pathway amino-acid biosynthesis; L-methionine biosynthesis via salvage pathway; L-methionine from S-methyl-5-thio-alpha-D-ribose 1-phosphate: step 1/6. Its function is as follows. Catalyzes the interconversion of methylthioribose-1-phosphate (MTR-1-P) into methylthioribulose-1-phosphate (MTRu-1-P). The protein is Methylthioribose-1-phosphate isomerase of Yersinia pseudotuberculosis serotype O:1b (strain IP 31758).